We begin with the raw amino-acid sequence, 351 residues long: Uroporphyrinogen decarboxylase (351 aa).

Substrate is bound by residues arginine 25–arginine 29, aspartate 74, tyrosine 151, serine 206, and histidine 325.

This sequence belongs to the uroporphyrinogen decarboxylase family. In terms of assembly, homodimer.

The protein localises to the cytoplasm. It catalyses the reaction uroporphyrinogen III + 4 H(+) = coproporphyrinogen III + 4 CO2. The protein operates within porphyrin-containing compound metabolism; protoporphyrin-IX biosynthesis; coproporphyrinogen-III from 5-aminolevulinate: step 4/4. Catalyzes the decarboxylation of four acetate groups of uroporphyrinogen-III to yield coproporphyrinogen-III. The polypeptide is Uroporphyrinogen decarboxylase (Chlorobium phaeovibrioides (strain DSM 265 / 1930) (Prosthecochloris vibrioformis (strain DSM 265))).